A 199-amino-acid chain; its full sequence is MIAKLTGRLDSNGAGHAVIDVGGVGYLVEASARTLDALGAVGGEVTIHTEMLVGEDFLRLLGFARAEERDWFRLLTSVQGVGAKVALAILSALEVADLQRALASGDSAMIARANGVGPKLAQRITHELKDKAGALGGISGSGPALSAAAGPVGDAIAALTGLGFKPGEASAAVAAANEELGADASLDALVRVALKKAAK.

Residues 1-64 (MIAKLTGRLD…EDFLRLLGFA (64 aa)) are domain I. Residues 65-143 (RAEERDWFRL…ALGGISGSGP (79 aa)) are domain II. A flexible linker region spans residues 144–146 (ALS). The interval 147–199 (AAAGPVGDAIAALTGLGFKPGEASAAVAAANEELGADASLDALVRVALKKAAK) is domain III.

The protein belongs to the RuvA family. As to quaternary structure, homotetramer. Forms an RuvA(8)-RuvB(12)-Holliday junction (HJ) complex. HJ DNA is sandwiched between 2 RuvA tetramers; dsDNA enters through RuvA and exits via RuvB. An RuvB hexamer assembles on each DNA strand where it exits the tetramer. Each RuvB hexamer is contacted by two RuvA subunits (via domain III) on 2 adjacent RuvB subunits; this complex drives branch migration. In the full resolvosome a probable DNA-RuvA(4)-RuvB(12)-RuvC(2) complex forms which resolves the HJ.

The protein localises to the cytoplasm. The RuvA-RuvB-RuvC complex processes Holliday junction (HJ) DNA during genetic recombination and DNA repair, while the RuvA-RuvB complex plays an important role in the rescue of blocked DNA replication forks via replication fork reversal (RFR). RuvA specifically binds to HJ cruciform DNA, conferring on it an open structure. The RuvB hexamer acts as an ATP-dependent pump, pulling dsDNA into and through the RuvAB complex. HJ branch migration allows RuvC to scan DNA until it finds its consensus sequence, where it cleaves and resolves the cruciform DNA. The sequence is that of Holliday junction branch migration complex subunit RuvA from Sphingopyxis alaskensis (strain DSM 13593 / LMG 18877 / RB2256) (Sphingomonas alaskensis).